The sequence spans 44 residues: MKNSFIGTTGRIPLWIVGFVVGSLALGLLGILFYGSYTGLGSSL.

A helical membrane pass occupies residues 12-32; the sequence is IPLWIVGFVVGSLALGLLGIL.

It belongs to the PsbJ family. In terms of assembly, PSII is composed of 1 copy each of membrane proteins PsbA, PsbB, PsbC, PsbD, PsbE, PsbF, PsbH, PsbI, PsbJ, PsbK, PsbL, PsbM, PsbT, PsbY, PsbZ, Psb30/Ycf12, at least 3 peripheral proteins of the oxygen-evolving complex and a large number of cofactors. It forms dimeric complexes.

The protein localises to the plastid. It localises to the chloroplast thylakoid membrane. In terms of biological role, one of the components of the core complex of photosystem II (PSII). PSII is a light-driven water:plastoquinone oxidoreductase that uses light energy to abstract electrons from H(2)O, generating O(2) and a proton gradient subsequently used for ATP formation. It consists of a core antenna complex that captures photons, and an electron transfer chain that converts photonic excitation into a charge separation. The sequence is that of Photosystem II reaction center protein J from Bigelowiella natans (Pedinomonas minutissima).